A 102-amino-acid chain; its full sequence is Putative septation protein SpoVG 1 (102 aa).

It belongs to the SpoVG family.

Could be involved in septation. In Listeria innocua serovar 6a (strain ATCC BAA-680 / CLIP 11262), this protein is Putative septation protein SpoVG 1.